The chain runs to 512 residues: Cytochrome P450 26B1 (512 aa).

Cysteine 441 contacts heme.

Belongs to the cytochrome P450 family. Requires heme as cofactor. In terms of tissue distribution, highly expressed in brain, particularly in the cerebellum and pons.

It is found in the endoplasmic reticulum membrane. The protein localises to the microsome membrane. The catalysed reaction is all-trans-retinoate + reduced [NADPH--hemoprotein reductase] + O2 = all-trans-4-hydroxyretinoate + oxidized [NADPH--hemoprotein reductase] + H2O + H(+). It carries out the reaction all-trans-retinoate + reduced [NADPH--hemoprotein reductase] + O2 = all-trans-18-hydroxyretinoate + oxidized [NADPH--hemoprotein reductase] + H2O + H(+). Its function is as follows. A cytochrome P450 monooxygenase involved in the metabolism of retinoates (RAs), the active metabolites of vitamin A, and critical signaling molecules in animals. RAs exist as at least four different isomers: all-trans-RA (atRA), 9-cis-RA, 13-cis-RA, and 9,13-dicis-RA, where atRA is considered to be the biologically active isomer, although 9-cis-RA and 13-cis-RA also have activity. Catalyzes the hydroxylation of atRA primarily at C-4 and C-18, thereby contributing to the regulation of atRA homeostasis and signaling. Hydroxylation of atRA limits its biological activity and initiates a degradative process leading to its eventual elimination. Involved in the convertion of atRA to all-trans-4-oxo-RA. Can oxidize all-trans-13,14-dihydroretinoate (DRA) to metabolites which could include all-trans-4-oxo-DRA, all-trans-4-hydroxy-DRA, all-trans-5,8-epoxy-DRA, and all-trans-18-hydroxy-DRA. Shows preference for the following substrates: atRA &gt; 9-cis-RA &gt; 13-cis-RA. Plays a central role in germ cell development: acts by degrading RAs in the developing testis, preventing STRA8 expression, thereby leading to delay of meiosis. Required for the maintenance of the undifferentiated state of male germ cells during embryonic development in Sertoli cells, inducing arrest in G0 phase of the cell cycle and preventing meiotic entry. Plays a role in skeletal development, both at the level of patterning and in the ossification of bone and the establishment of some synovial joints. Essential for postnatal survival. Functionally, also has a significant activity in oxidation of tazarotenic acid and may therefore metabolize that xenobiotic in vivo. The chain is Cytochrome P450 26B1 (CYP26B1) from Homo sapiens (Human).